The sequence spans 341 residues: Glycerol-3-phosphate dehydrogenase [NAD(P)+] (341 aa).

The NADPH site is built by S15, W16, R36, and K110. 3 residues coordinate sn-glycerol 3-phosphate: K110, G139, and S141. A143 provides a ligand contact to NADPH. Positions 194, 247, 257, 258, and 259 each coordinate sn-glycerol 3-phosphate. K194 acts as the Proton acceptor in catalysis. Position 258 (R258) interacts with NADPH. NADPH-binding residues include V282 and E284.

It belongs to the NAD-dependent glycerol-3-phosphate dehydrogenase family.

It localises to the cytoplasm. The catalysed reaction is sn-glycerol 3-phosphate + NAD(+) = dihydroxyacetone phosphate + NADH + H(+). It carries out the reaction sn-glycerol 3-phosphate + NADP(+) = dihydroxyacetone phosphate + NADPH + H(+). Its pathway is membrane lipid metabolism; glycerophospholipid metabolism. In terms of biological role, catalyzes the reduction of the glycolytic intermediate dihydroxyacetone phosphate (DHAP) to sn-glycerol 3-phosphate (G3P), the key precursor for phospholipid synthesis. In Stenotrophomonas maltophilia (strain R551-3), this protein is Glycerol-3-phosphate dehydrogenase [NAD(P)+].